A 358-amino-acid chain; its full sequence is Putative movement protein (358 aa).

In terms of biological role, transports viral genome to neighboring plant cells directly through plasmosdesmata, without any budding. The movement protein allows efficient cell to cell propagation, by bypassing the host cell wall barrier (Potential). This chain is Putative movement protein, found in Raspberry bushy dwarf virus (isolate Malling Jewel raspberry/R15) (RBDV).